A 504-amino-acid chain; its full sequence is Hexose transporter 1 (504 aa).

Topologically, residues 1 to 29 (MTKSSKDICSENEGKKNGKSGFFSTSFKY) are cytoplasmic. The helical transmembrane segment at 30–50 (VLSACIASFIFGYQVSVLNTI) threads the bilayer. The Extracellular segment spans residues 51–78 (KNFIVVEFEWCKGEKDRLNCSNNTIQSS). Cys-61 and Cys-70 form a disulfide bridge. Residues 79–99 (FLLASVFIGAVLGCGFSGYLV) form a helical membrane-spanning segment. Over 100-104 (QFGRR) the chain is Cytoplasmic. A helical membrane pass occupies residues 105–125 (LSLLIIYNFFFLVSILTSITH). Residues 126-129 (HFHT) are Extracellular-facing. The chain crosses the membrane as a helical span at residues 130–150 (ILFARLLSGFGIGLVTVSVPM). Topologically, residues 151–165 (YISEMTHKDKKGAYG) are cytoplasmic. The helical transmembrane segment at 166 to 186 (VMHQLFITFGIFVAVMLGLAM) threads the bilayer. Gln-169 contacts alpha-D-glucose. Residue Gln-169 coordinates beta-D-glucose. Topologically, residues 187 to 207 (GEGPKADSTEPLTSFAKLWWR) are extracellular. A helical transmembrane segment spans residues 208 to 228 (LMFLFPSVISLIGILALVVFF). Residues 229–293 (KEETPYFLFE…SALKIPSYRY (65 aa)) are Cytoplasmic-facing. Residues 294 to 314 (VIILGCLLSGLQQFTGINVLV) form a helical membrane-spanning segment. Alpha-D-glucose is bound by residues Gln-305, Gln-306, and Asn-311. Gln-305 is a binding site for beta-D-glucose. Asn-311 contributes to the beta-D-glucose binding site. Topologically, residues 315-331 (SNSNELYKEFLDSHLIT) are extracellular. Residues 332 to 352 (ILSVVMTAVNFLMTFPAIYIV) form a helical membrane-spanning segment. Position 341 (Asn-341) interacts with beta-D-glucose. Over 353–358 (EKLGRK) the chain is Cytoplasmic. A helical membrane pass occupies residues 359-379 (TLLLWGCVGVLVAYLPTAIAN). Residues 380 to 392 (EINRNSNFVKILS) are Extracellular-facing. Residues 393–413 (IVATFVMIISFAVSYGPVLWI) traverse the membrane as a helical segment. An alpha-D-glucose-binding site is contributed by Trp-412. The Cytoplasmic segment spans residues 414–429 (YLHEMFPSEIKDSAAS). A helical transmembrane segment spans residues 430-450 (LASLVNWVCAIIVVFPSDIII). Residues 451–455 (KKSPS) are Extracellular-facing. A helical membrane pass occupies residues 456–476 (ILFIVFSVMSILTFFFIFFFI). Residues 477–504 (KETKGGEIGTSPYITMEERQKHMTKSVV) are Cytoplasmic-facing.

Belongs to the major facilitator superfamily. Sugar transporter (TC 2.A.1.1) family. In terms of assembly, homodimer.

The protein resides in the cell membrane. The enzyme catalyses D-glucose(out) = D-glucose(in). It carries out the reaction D-fructose(out) = D-fructose(in). The catalysed reaction is D-galactose(in) = D-galactose(out). It catalyses the reaction D-mannose(out) = D-mannose(in). The enzyme catalyses D-glucosamine(out) = D-glucosamine(in). It carries out the reaction D-xylose(out) = D-xylose(in). Inhibited by cytochalasin B. Inhibited by compound 3361 (3-O-((undec-10-en)-1-yl)-D-glucose). Inhibited by compound HTI-1. Sodium-independent facilitative hexose transporter. Can transport D-glucose and D-fructose. Can transport D-mannose, D-galactose, D-xylose and D-glucosamine. This Plasmodium falciparum (isolate 3D7) protein is Hexose transporter 1.